The following is a 133-amino-acid chain: Homeobox protein BarH-like 2 (133 aa).

Residues Glu1–Val46 constitute a DNA-binding region (homeobox). The interval Met45–Ser133 is disordered.

It belongs to the BAR homeobox family. As to expression, expressed in keratinizing epithelia such as wool follicle, tongue and esophagus. Expressed at low level in thymus. Not detected in spleen, skeletal muscle, brain, heart kidney, liver and lung.

The protein localises to the nucleus. In terms of biological role, transcription factor. Binds optimally to the DNA consensus sequence 5'-YYTAATGRTTTTY-3'. May control the expression of neural adhesion molecules such as L1 or Ng-CAM during embryonic development of both the central and peripherical nervous system. May be involved in controlling adhesive processes in keratinizing epithelia. In Ovis aries (Sheep), this protein is Homeobox protein BarH-like 2 (BARX2).